The sequence spans 65 residues: Large ribosomal subunit protein uL30 (65 aa).

It belongs to the universal ribosomal protein uL30 family. As to quaternary structure, part of the 50S ribosomal subunit.

The sequence is that of Large ribosomal subunit protein uL30 from Mycobacterium bovis (strain ATCC BAA-935 / AF2122/97).